We begin with the raw amino-acid sequence, 336 residues long: tRNA(Ile)-lysidine synthase (336 aa).

32 to 37 is an ATP binding site; that stretch reads SGGQDS.

Belongs to the tRNA(Ile)-lysidine synthase family.

It localises to the cytoplasm. The catalysed reaction is cytidine(34) in tRNA(Ile2) + L-lysine + ATP = lysidine(34) in tRNA(Ile2) + AMP + diphosphate + H(+). Its function is as follows. Ligates lysine onto the cytidine present at position 34 of the AUA codon-specific tRNA(Ile) that contains the anticodon CAU, in an ATP-dependent manner. Cytidine is converted to lysidine, thus changing the amino acid specificity of the tRNA from methionine to isoleucine. The polypeptide is tRNA(Ile)-lysidine synthase (Synechococcus sp. (strain JA-3-3Ab) (Cyanobacteria bacterium Yellowstone A-Prime)).